Consider the following 569-residue polypeptide: Proline--tRNA ligase (569 aa).

It belongs to the class-II aminoacyl-tRNA synthetase family. ProS type 1 subfamily. Homodimer.

Its subcellular location is the cytoplasm. It catalyses the reaction tRNA(Pro) + L-proline + ATP = L-prolyl-tRNA(Pro) + AMP + diphosphate. Catalyzes the attachment of proline to tRNA(Pro) in a two-step reaction: proline is first activated by ATP to form Pro-AMP and then transferred to the acceptor end of tRNA(Pro). As ProRS can inadvertently accommodate and process non-cognate amino acids such as alanine and cysteine, to avoid such errors it has two additional distinct editing activities against alanine. One activity is designated as 'pretransfer' editing and involves the tRNA(Pro)-independent hydrolysis of activated Ala-AMP. The other activity is designated 'posttransfer' editing and involves deacylation of mischarged Ala-tRNA(Pro). The misacylated Cys-tRNA(Pro) is not edited by ProRS. This Desulforamulus reducens (strain ATCC BAA-1160 / DSM 100696 / MI-1) (Desulfotomaculum reducens) protein is Proline--tRNA ligase.